The following is a 571-amino-acid chain: Quinone-dependent D-lactate dehydrogenase (571 aa).

The region spanning 42 to 213 (GQGDALAVVF…SKLDDDRIKD (172 aa)) is the FAD-binding PCMH-type domain. FAD contacts are provided by residues 76–80 (AANTG), 84–85 (GS), glycine 143, serine 150, glycine 160, and valine 262. The tract at residues 546–571 (RENDPTNSMNPGIGKTSKRKNWQEVE) is disordered.

Belongs to the quinone-dependent D-lactate dehydrogenase family. FAD serves as cofactor.

The protein localises to the cell inner membrane. It catalyses the reaction (R)-lactate + a quinone = a quinol + pyruvate. With respect to regulation, inhibited by 2-hydroxy-3-butynoic acid, but not by p-chloromercuribenzoate, n-ethylmaleimide, or 5,5'-dithiobis(2-nitrobenzoic acid). Functionally, catalyzes the oxidation of D-lactate to pyruvate. Electrons derived from D-lactate oxidation are transferred to the ubiquinone/cytochrome electron transfer chain, where they may be used to provide energy for the active transport of a variety of amino acids and sugars across the membrane. In Escherichia coli (strain K12), this protein is Quinone-dependent D-lactate dehydrogenase.